Here is a 399-residue protein sequence, read N- to C-terminus: Elongation factor Tu (399 aa).

Residues lysine 10–glutamate 204 enclose the tr-type G domain. The tract at residues glycine 19 to threonine 26 is G1. Glycine 19–threonine 26 contributes to the GTP binding site. Threonine 26 provides a ligand contact to Mg(2+). Residues glycine 60–asparagine 64 form a G2 region. Residues aspartate 81 to glycine 84 form a G3 region. GTP contacts are provided by residues aspartate 81–histidine 85 and asparagine 136–aspartate 139. The G4 stretch occupies residues asparagine 136–aspartate 139. Positions serine 174–leucine 176 are G5.

The protein belongs to the TRAFAC class translation factor GTPase superfamily. Classic translation factor GTPase family. EF-Tu/EF-1A subfamily. In terms of assembly, monomer.

Its subcellular location is the cytoplasm. The catalysed reaction is GTP + H2O = GDP + phosphate + H(+). In terms of biological role, GTP hydrolase that promotes the GTP-dependent binding of aminoacyl-tRNA to the A-site of ribosomes during protein biosynthesis. The protein is Elongation factor Tu of Prochlorococcus marinus (strain AS9601).